A 402-amino-acid chain; its full sequence is MKLMTMPSEFQKALPILTKIKEAGYEAYFVGGSVRDVLLERPIHDVDIATSSYPEETKAIFNRTVDVGIEHGTVLVLENGGEYEITTFRTEDVYVDYRRPSQVSFVRSLEEDLKRRDFTVNALALDENGQVIDKFRGLIDLEQKRLRAVGKAEERFEEDALRIMRGFRFAASLDFDIEAATFEAMRSHSPLLEKISVERSFTEFDKLLMAPHWRKGISAMIACQAYDYLPGLKQQEAGLNHLIVSLKDNFTFSDHHQAWAYVMISLAIEDPKSFLKAWKTSNDFQRYVTKLIALYRIRQERSFEKLDIYQYGKEMASLVEGLRKAQSLSVDMDHIEALDQALAIHNKYDIVLNGSHLIKDFGMKPGPQLGLMLEKVELAIVEGRLDNDFTTIEAFVREELAT.

Positions 32 and 35 each coordinate ATP. The CTP site is built by glycine 32 and arginine 35. Mg(2+)-binding residues include aspartate 45 and aspartate 47. Positions 116, 159, 162, 165, and 168 each coordinate ATP. Residues arginine 116, aspartate 159, arginine 162, arginine 165, and arginine 168 each coordinate CTP.

It belongs to the tRNA nucleotidyltransferase/poly(A) polymerase family. Bacterial CCA-adding enzyme type 3 subfamily. Homodimer. Requires Mg(2+) as cofactor.

It catalyses the reaction a tRNA precursor + 2 CTP + ATP = a tRNA with a 3' CCA end + 3 diphosphate. It carries out the reaction a tRNA with a 3' CCA end + 2 CTP + ATP = a tRNA with a 3' CCACCA end + 3 diphosphate. Functionally, catalyzes the addition and repair of the essential 3'-terminal CCA sequence in tRNAs without using a nucleic acid template. Adds these three nucleotides in the order of C, C, and A to the tRNA nucleotide-73, using CTP and ATP as substrates and producing inorganic pyrophosphate. tRNA 3'-terminal CCA addition is required both for tRNA processing and repair. Also involved in tRNA surveillance by mediating tandem CCA addition to generate a CCACCA at the 3' terminus of unstable tRNAs. While stable tRNAs receive only 3'-terminal CCA, unstable tRNAs are marked with CCACCA and rapidly degraded. The polypeptide is CCA-adding enzyme (Streptococcus pyogenes serotype M3 (strain ATCC BAA-595 / MGAS315)).